Consider the following 144-residue polypeptide: TSC22 domain family protein 1 (144 aa).

The interval 77–98 (LKEQIKELIEKNSQLEQENNLL) is leucine-zipper. The tract at residues 109-144 (QFQAQLQTGSPPATTQPQGTTQPPAQPASQGSGPTA) is disordered. Residues 115-144 (QTGSPPATTQPQGTTQPPAQPASQGSGPTA) are compositionally biased toward low complexity.

Belongs to the TSC-22/Dip/Bun family. Forms homodimers. Forms a heterodimer with TSC22D4/THG1. Interacts with histone H1-2. Interacts with GNL3.

The protein resides in the cytoplasm. Its subcellular location is the nucleus. Its function is as follows. Transcriptional repressor. Plays a role in the repression of hematopoietic precursor cell growth. Promotes IL2 deprivation-induced apoptosis in T-lymphocytes, via repression of TSC22D3/GILZ transcription and activation of the caspase cascade. Positively regulates cell death in response to TGFB3 during mammary gland involution. This is TSC22 domain family protein 1 from Bos taurus (Bovine).